The chain runs to 350 residues: Phosphoribosylformylglycinamidine cyclo-ligase (350 aa).

This sequence belongs to the AIR synthase family.

It localises to the cytoplasm. It carries out the reaction 2-formamido-N(1)-(5-O-phospho-beta-D-ribosyl)acetamidine + ATP = 5-amino-1-(5-phospho-beta-D-ribosyl)imidazole + ADP + phosphate + H(+). The protein operates within purine metabolism; IMP biosynthesis via de novo pathway; 5-amino-1-(5-phospho-D-ribosyl)imidazole from N(2)-formyl-N(1)-(5-phospho-D-ribosyl)glycinamide: step 2/2. The sequence is that of Phosphoribosylformylglycinamidine cyclo-ligase from Cupriavidus necator (strain ATCC 17699 / DSM 428 / KCTC 22496 / NCIMB 10442 / H16 / Stanier 337) (Ralstonia eutropha).